A 413-amino-acid chain; its full sequence is 2,3-bisphosphoglycerate-independent phosphoglycerate mutase (413 aa).

It belongs to the BPG-independent phosphoglycerate mutase family. A-PGAM subfamily.

It carries out the reaction (2R)-2-phosphoglycerate = (2R)-3-phosphoglycerate. It participates in carbohydrate degradation; glycolysis; pyruvate from D-glyceraldehyde 3-phosphate: step 3/5. Functionally, catalyzes the interconversion of 2-phosphoglycerate and 3-phosphoglycerate. In Sulfurisphaera tokodaii (strain DSM 16993 / JCM 10545 / NBRC 100140 / 7) (Sulfolobus tokodaii), this protein is 2,3-bisphosphoglycerate-independent phosphoglycerate mutase.